Consider the following 235-residue polypeptide: Elongation factor Tu (235 aa).

The tr-type G domain occupies 1–125; sequence KNMITGAAQM…EVDEYIPTPE (125 aa). GTP is bound at residue 47–50; that stretch reads NKED.

The protein belongs to the TRAFAC class translation factor GTPase superfamily. Classic translation factor GTPase family. EF-Tu/EF-1A subfamily. As to quaternary structure, monomer.

The protein localises to the cytoplasm. The enzyme catalyses GTP + H2O = GDP + phosphate + H(+). Its function is as follows. GTP hydrolase that promotes the GTP-dependent binding of aminoacyl-tRNA to the A-site of ribosomes during protein biosynthesis. The chain is Elongation factor Tu (tufA) from Gloeothece membranacea (strain PCC 6501 / SAG 26.84).